Reading from the N-terminus, the 245-residue chain is MSTEPIAVSITGLRKSFGDKTVLDGVDLTIRRGEFVVLLGPSGTGKTTLLRLLTGLEVPDAGEVLVPGRRTTVYQEPRLIPSKRVLANVLVGLRRTRSNRAAGLAALAEVQLDGKADQWPATLSGGEAQRAALARALVREPELLLLDEPFAALDALTRLRMQDLVGDLVARHRPAVLMVTHDVDEAVRLADRVIVLDRGRFAVDTAITAPRPRERADPDILRYQTEFLAHLGVGGSDRRPIRSAS.

One can recognise an ABC transporter domain in the interval Val8–Tyr223. ATP is bound at residue Gly40 to Thr47.

It belongs to the ABC transporter superfamily. Aliphatic sulfonates importer (TC 3.A.1.17.2) family. In terms of assembly, the complex is composed of two ATP-binding proteins (SsuB), two transmembrane proteins (SsuC) and a solute-binding protein (SsuA).

It localises to the cell membrane. It catalyses the reaction ATP + H2O + aliphatic sulfonate-[sulfonate-binding protein]Side 1 = ADP + phosphate + aliphatic sulfonateSide 2 + [sulfonate-binding protein]Side 1.. Its function is as follows. Part of the ABC transporter complex SsuABC involved in aliphatic sulfonates import. Responsible for energy coupling to the transport system. In Nocardia farcinica (strain IFM 10152), this protein is Aliphatic sulfonates import ATP-binding protein SsuB 1.